Reading from the N-terminus, the 811-residue chain is U-box domain-containing protein 43 (811 aa).

The 80-residue stretch at 24 to 103 (NIYEAFICPL…EEWRARNDAL (80 aa)) folds into the U-box domain. ARM repeat units lie at residues 136–175 (RKIR…VVVE), 178–217 (EESK…ELSK), 220–261 (ALCE…NLER), 263–302 (EENV…VLAL), 303–342 (NNDV…NISS), 344–388 (EGSA…NIVN), 399–438 (GPHH…GLTS), 444–484 (INVV…NISP), and 489–528 (ELAN…LLAE).

It carries out the reaction S-ubiquitinyl-[E2 ubiquitin-conjugating enzyme]-L-cysteine + [acceptor protein]-L-lysine = [E2 ubiquitin-conjugating enzyme]-L-cysteine + N(6)-ubiquitinyl-[acceptor protein]-L-lysine.. Its pathway is protein modification; protein ubiquitination. Functions as an E3 ubiquitin ligase. The polypeptide is U-box domain-containing protein 43 (PUB43) (Arabidopsis thaliana (Mouse-ear cress)).